The sequence spans 367 residues: UDP-N-acetylglucosamine--N-acetylmuramyl-(pentapeptide) pyrophosphoryl-undecaprenol N-acetylglucosamine transferase (367 aa).

Residues 15-17, N127, R163, S191, I249, and Q294 contribute to the UDP-N-acetyl-alpha-D-glucosamine site; that span reads TGG.

This sequence belongs to the glycosyltransferase 28 family. MurG subfamily.

It localises to the cell inner membrane. The catalysed reaction is di-trans,octa-cis-undecaprenyl diphospho-N-acetyl-alpha-D-muramoyl-L-alanyl-D-glutamyl-meso-2,6-diaminopimeloyl-D-alanyl-D-alanine + UDP-N-acetyl-alpha-D-glucosamine = di-trans,octa-cis-undecaprenyl diphospho-[N-acetyl-alpha-D-glucosaminyl-(1-&gt;4)]-N-acetyl-alpha-D-muramoyl-L-alanyl-D-glutamyl-meso-2,6-diaminopimeloyl-D-alanyl-D-alanine + UDP + H(+). The protein operates within cell wall biogenesis; peptidoglycan biosynthesis. In terms of biological role, cell wall formation. Catalyzes the transfer of a GlcNAc subunit on undecaprenyl-pyrophosphoryl-MurNAc-pentapeptide (lipid intermediate I) to form undecaprenyl-pyrophosphoryl-MurNAc-(pentapeptide)GlcNAc (lipid intermediate II). This Burkholderia pseudomallei (strain 668) protein is UDP-N-acetylglucosamine--N-acetylmuramyl-(pentapeptide) pyrophosphoryl-undecaprenol N-acetylglucosamine transferase.